The sequence spans 166 residues: 2-C-methyl-D-erythritol 2,4-cyclodiphosphate synthase (166 aa).

2 residues coordinate a divalent metal cation: Asp-17 and His-19. Residues Asp-17–His-19 and His-43–Ser-44 each bind 4-CDP-2-C-methyl-D-erythritol 2-phosphate. An a divalent metal cation-binding site is contributed by His-51. 4-CDP-2-C-methyl-D-erythritol 2-phosphate contacts are provided by residues Asp-65–Gly-67, Ala-109–Ala-115, and Arg-151.

Belongs to the IspF family. Homotrimer. It depends on a divalent metal cation as a cofactor.

It catalyses the reaction 4-CDP-2-C-methyl-D-erythritol 2-phosphate = 2-C-methyl-D-erythritol 2,4-cyclic diphosphate + CMP. The protein operates within isoprenoid biosynthesis; isopentenyl diphosphate biosynthesis via DXP pathway; isopentenyl diphosphate from 1-deoxy-D-xylulose 5-phosphate: step 4/6. In terms of biological role, involved in the biosynthesis of isopentenyl diphosphate (IPP) and dimethylallyl diphosphate (DMAPP), two major building blocks of isoprenoid compounds. Catalyzes the conversion of 4-diphosphocytidyl-2-C-methyl-D-erythritol 2-phosphate (CDP-ME2P) to 2-C-methyl-D-erythritol 2,4-cyclodiphosphate (ME-CPP) with a corresponding release of cytidine 5-monophosphate (CMP). The chain is 2-C-methyl-D-erythritol 2,4-cyclodiphosphate synthase from Rhodopirellula baltica (strain DSM 10527 / NCIMB 13988 / SH1).